Consider the following 312-residue polypeptide: Putative electron transfer flavoprotein subunit YdiR (312 aa).

Residue 254–282 (LYLTLGISGQIQHMVGGNGAKVIVAINKD) participates in FAD binding.

This sequence belongs to the ETF alpha-subunit/FixB family. In terms of assembly, ydiR and YdiQ form a heterodimer.

In terms of biological role, may play a role in a redox process. The polypeptide is Putative electron transfer flavoprotein subunit YdiR (ydiR) (Escherichia coli (strain K12)).